A 747-amino-acid polypeptide reads, in one-letter code: DNA topoisomerase 4 subunit A (747 aa).

Residues 35 to 498 (LPFIGDGLKP…EAKMISESDM (464 aa)) form the Topo IIA-type catalytic domain. Residue Y124 is the O-(5'-phospho-DNA)-tyrosine intermediate of the active site.

Belongs to the type II topoisomerase GyrA/ParC subunit family. ParC type 1 subfamily. In terms of assembly, heterotetramer composed of ParC and ParE.

The protein resides in the cell membrane. It catalyses the reaction ATP-dependent breakage, passage and rejoining of double-stranded DNA.. Functionally, topoisomerase IV is essential for chromosome segregation. It relaxes supercoiled DNA. Performs the decatenation events required during the replication of a circular DNA molecule. This Haemophilus influenzae (strain ATCC 51907 / DSM 11121 / KW20 / Rd) protein is DNA topoisomerase 4 subunit A.